Consider the following 406-residue polypeptide: Tryptophan synthase beta chain (406 aa).

An N6-(pyridoxal phosphate)lysine modification is found at Lys-99.

The protein belongs to the TrpB family. In terms of assembly, tetramer of two alpha and two beta chains. It depends on pyridoxal 5'-phosphate as a cofactor.

It carries out the reaction (1S,2R)-1-C-(indol-3-yl)glycerol 3-phosphate + L-serine = D-glyceraldehyde 3-phosphate + L-tryptophan + H2O. Its pathway is amino-acid biosynthesis; L-tryptophan biosynthesis; L-tryptophan from chorismate: step 5/5. Its function is as follows. The beta subunit is responsible for the synthesis of L-tryptophan from indole and L-serine. This Rhizobium leguminosarum bv. trifolii (strain WSM2304) protein is Tryptophan synthase beta chain.